A 230-amino-acid chain; its full sequence is Fibrillarin-like rRNA/tRNA 2'-O-methyltransferase (230 aa).

S-adenosyl-L-methionine-binding positions include 89-90 (TT), 107-108 (EV), 132-133 (DA), and 152-155 (DISQ).

The protein belongs to the methyltransferase superfamily. Fibrillarin family. Interacts with nop5. Component of box C/D small ribonucleoprotein (sRNP) particles that contain rpl7ae, FlpA and nop5, plus a guide RNA.

Functionally, involved in pre-rRNA and tRNA processing. Utilizes the methyl donor S-adenosyl-L-methionine to catalyze the site-specific 2'-hydroxyl methylation of ribose moieties in rRNA and tRNA. Site specificity is provided by a guide RNA that base pairs with the substrate. Methylation occurs at a characteristic distance from the sequence involved in base pairing with the guide RNA. The sequence is that of Fibrillarin-like rRNA/tRNA 2'-O-methyltransferase from Thermoplasma acidophilum (strain ATCC 25905 / DSM 1728 / JCM 9062 / NBRC 15155 / AMRC-C165).